We begin with the raw amino-acid sequence, 282 residues long: Pantothenate synthetase (282 aa).

26–33 contributes to the ATP binding site; it reads MGNLHEGH. The active-site Proton donor is His-33. (R)-pantoate is bound at residue Gln-57. Residue Gln-57 participates in beta-alanine binding. Position 144-147 (144-147) interacts with ATP; the sequence is GQKD. Gln-150 is a (R)-pantoate binding site. ATP-binding positions include Leu-173 and 181-184; that span reads LSSR.

This sequence belongs to the pantothenate synthetase family. As to quaternary structure, homodimer.

The protein localises to the cytoplasm. It carries out the reaction (R)-pantoate + beta-alanine + ATP = (R)-pantothenate + AMP + diphosphate + H(+). It functions in the pathway cofactor biosynthesis; (R)-pantothenate biosynthesis; (R)-pantothenate from (R)-pantoate and beta-alanine: step 1/1. In terms of biological role, catalyzes the condensation of pantoate with beta-alanine in an ATP-dependent reaction via a pantoyl-adenylate intermediate. This Albidiferax ferrireducens (strain ATCC BAA-621 / DSM 15236 / T118) (Rhodoferax ferrireducens) protein is Pantothenate synthetase.